Consider the following 38-residue polypeptide: Large ribosomal subunit protein bL36 (38 aa).

The protein belongs to the bacterial ribosomal protein bL36 family.

This chain is Large ribosomal subunit protein bL36, found in Pelodictyon phaeoclathratiforme (strain DSM 5477 / BU-1).